Consider the following 1476-residue polypeptide: Coiled-coil domain-containing protein 88B (1476 aa).

The stretch at S253–Q481 forms a coiled coil. Disordered regions lie at residues Q427–D451, V509–L706, R825–E866, and L1323–Q1476. A Phosphoserine modification is found at S436. The span at S572 to Q586 shows a compositional bias: polar residues. At S596 the chain carries Phosphoserine. Basic and acidic residues-rich tracts occupy residues E678 to V690, R825 to R834, and A842 to E866. Residues L720–E1303 are a coiled coil. 2 positions are modified to phosphoserine: S1348 and S1379. Basic and acidic residues predominate over residues L1448 to P1469.

This sequence belongs to the CCDC88 family. Homodimer. Interacts with DOCK8. Interacts (via C-terminus) with intact microtubules. Interacts with dynein-dynactin motor complex. Interacts (via C-terminus) with HSPA5. Expressed in endothelium (at protein level). Expressed in NK cells (at protein level).

It localises to the membrane. The protein resides in the cytoplasm. It is found in the cytoskeleton. The protein localises to the microtubule organizing center. Its subcellular location is the endoplasmic reticulum. It localises to the golgi apparatus. Its function is as follows. Acts as a positive regulator of T-cell maturation and inflammatory function. Required for several functions of T-cells, in both the CD4(+) and the CD8(+) compartments and this includes expression of cell surface markers of activation, proliferation, and cytokine production in response to specific or non-specific stimulation. Enhances NK cell cytotoxicity by positively regulating polarization of microtubule-organizing center (MTOC) to cytotoxic synapse, lytic granule transport along microtubules, and dynein-mediated clustering to MTOC. Interacts with HSPA5 and stabilizes the interaction between HSPA5 and ERN1, leading to suppression of ERN1-induced JNK activation and endoplasmic reticulum stress-induced apoptosis. The polypeptide is Coiled-coil domain-containing protein 88B (CCDC88B) (Homo sapiens (Human)).